A 322-amino-acid chain; its full sequence is Mas-related G-protein coupled receptor member B5 (322 aa).

Topologically, residues 1 to 34 (MGLTTPAWNINNTVVNGSNNTEHFSCVSKFNTLN) are extracellular. N-linked (GlcNAc...) asparagine glycans are attached at residues asparagine 11, asparagine 16, and asparagine 19. Residues 35–55 (FLTVIIAMFGLAGNAIVLWLL) traverse the membrane as a helical segment. The Cytoplasmic segment spans residues 56 to 70 (AFHLPRNAFSVYVCN). A helical membrane pass occupies residues 71–91 (LACADFLQLCTQILGSLECFL). Residues 92 to 98 (QLNRRHT) are Extracellular-facing. Residues 99 to 119 (FFLTVVFMFAYLAGLCMIAAI) form a helical membrane-spanning segment. At 120–147 (SVERSLSVMWPIWYHCQRPRHTSSIMCA) the chain is on the cytoplasmic side. The helical transmembrane segment at 148–168 (LLWAFCLLLNFLLGEGCGLLF) threads the bilayer. Residues 169–172 (SDPK) are Extracellular-facing. Residues 173–193 (YYFCITCALITTALIILLTVV) traverse the membrane as a helical segment. The Cytoplasmic portion of the chain corresponds to 194 to 216 (PSVSSLALLVKMICGSHRIPVTR). The helical transmembrane segment at 217 to 237 (FYVTIALTLVVFIFLGLPFGI) threads the bilayer. The Extracellular segment spans residues 238 to 260 (YSSFLIMFKEFQSIFSYHVLEVT). A helical membrane pass occupies residues 261-281 (IFLSCVNSCANPIIYFLVGSI). Residues 282–322 (RQHRLQWQSLKLLLQRAMQDTPEEDSGERVPSQRSGELESV) lie on the Cytoplasmic side of the membrane. A disordered region spans residues 302 to 322 (TPEEDSGERVPSQRSGELESV).

Belongs to the G-protein coupled receptor 1 family. Mas subfamily.

Its subcellular location is the membrane. Its function is as follows. Orphan receptor. Probably involved in the function of nociceptive neurons. May regulate nociceptor function and/or development, including the sensation or modulation of pain. This chain is Mas-related G-protein coupled receptor member B5 (Mrgprb5), found in Mus musculus (Mouse).